A 523-amino-acid polypeptide reads, in one-letter code: Sensory neuron membrane protein 1 (523 aa).

Topologically, residues 1-11 (MQLPRELKYAA) are cytoplasmic. The chain crosses the membrane as a helical span at residues 12 to 32 (IAGGVALFGLIFGWVLFPTIL). Residues 33–458 (KSQLKKEMAL…HQLFIPKRVV (426 aa)) are Extracellular-facing. N-linked (GlcNAc...) asparagine glycans are attached at residues Asn-67 and Asn-229. Disulfide bonds link Cys-268–Cys-333, Cys-297–Cys-352, and Cys-335–Cys-341. An N-linked (GlcNAc...) asparagine glycan is attached at Asn-440. Residues 459–479 (GVLRWWMVSFGSLGAVIGIVF) traverse the membrane as a helical segment. At 480-523 (HFRDHIMRLAVSGDTKVSKVTPEEEEQKDISVIGQAQEPAKVNI) the chain is on the cytoplasmic side.

Belongs to the CD36 family.

The protein localises to the cell membrane. Plays an olfactory role that is not restricted to pheromone sensitivity. The sequence is that of Sensory neuron membrane protein 1 from Helicoverpa armigera (Cotton bollworm).